The following is an 81-amino-acid chain: CLAVATA3/ESR (CLE)-related protein 12 (81 aa).

Residues 1-31 form the signal peptide; it reads MENSNKVPISKIGLIMLMIFSTFFMSPHARR. Positions 55–67 are enriched in basic and acidic residues; the sequence is KRSRTDLEDKAVP. Residues 55-81 are disordered; sequence KRSRTDLEDKAVPGDRLSPGGPNHIHN. P73 and P76 each carry hydroxyproline. P76 carries an O-linked (Ara...) hydroxyproline glycan.

Belongs to the CLV3/ESR signal peptide family. Post-translationally, the O-glycosylation (arabinosylation) of the hydroxyproline Pro-76 enhances binding affinity of the CLE12p peptide for its receptor. Expressed in young nodules throughout the central tissue. Expressed in the apical region of elongated nodules, corresponding to the meristematic and early infection zones.

It localises to the secreted. The protein resides in the extracellular space. Its function is as follows. Signaling peptide involved in the regulation of nodulation. Moves from root to shoot to function with the receptor kinase SUNN, in a signaling pathway that plays roles during cellular differentiation, both at the onset of nodulation, and later during nodule meristem development and subsequent homeostasis. Interacts with SUNN signaling to control nodule numbers. SUNN is involved in the autoregulation of nodulation (AON), a long distance systemic signaling from root to shoot and back again, which allows legumes to limit the number of root nodules formed based on available nitrogen and previous rhizobial colonization. This Medicago truncatula (Barrel medic) protein is CLAVATA3/ESR (CLE)-related protein 12.